A 337-amino-acid chain; its full sequence is Transaldolase (337 aa).

The Nuclear localization signal motif lies at 1 to 10 (MSSSPVKRQR). The residue at position 115 (Lys-115) is an N6-acetyllysine. Catalysis depends on Lys-142, which acts as the Schiff-base intermediate with substrate. Lys-219 bears the N6-acetyllysine mark. A phosphoserine mark is found at Ser-237 and Ser-256. N6-acetyllysine is present on residues Lys-269, Lys-286, and Lys-321.

This sequence belongs to the transaldolase family. Type 1 subfamily. As to quaternary structure, homodimer. Heterodimer with isoform 2. Interacts with KPNA1 and KPNA4.

The protein resides in the nucleus. It is found in the cytoplasm. It catalyses the reaction D-sedoheptulose 7-phosphate + D-glyceraldehyde 3-phosphate = D-erythrose 4-phosphate + beta-D-fructose 6-phosphate. The protein operates within carbohydrate degradation; pentose phosphate pathway; D-glyceraldehyde 3-phosphate and beta-D-fructose 6-phosphate from D-ribose 5-phosphate and D-xylulose 5-phosphate (non-oxidative stage): step 2/3. In terms of biological role, catalyzes the rate-limiting step of the non-oxidative phase in the pentose phosphate pathway. Catalyzes the reversible conversion of sedheptulose-7-phosphate and D-glyceraldehyde 3-phosphate into erythrose-4-phosphate and beta-D-fructose 6-phosphate. Not only acts as a pentose phosphate pathway enzyme, but also affects other metabolite pathways by altering its subcellular localization between the nucleus and the cytoplasm. The chain is Transaldolase from Homo sapiens (Human).